Here is a 187-residue protein sequence, read N- to C-terminus: Cell division protein SepF (187 aa).

Residues 21–97 are disordered; sequence EVEVPDKQQQ…ATPNNASQES (77 aa). Composition is skewed to polar residues over residues 38–63 and 70–97; these read EQSQ…YTTT and RMSN…SQES.

It belongs to the SepF family. As to quaternary structure, homodimer. Interacts with FtsZ.

Its subcellular location is the cytoplasm. Its function is as follows. Cell division protein that is part of the divisome complex and is recruited early to the Z-ring. Probably stimulates Z-ring formation, perhaps through the cross-linking of FtsZ protofilaments. Its function overlaps with FtsA. This chain is Cell division protein SepF, found in Staphylococcus aureus (strain Mu3 / ATCC 700698).